Reading from the N-terminus, the 2310-residue chain is Peroxide stress-activated histidine kinase mak2 (2310 aa).

A Protein kinase domain is found at 12-292 (DYAISQLGEF…SATDLCYTIV (281 aa)). Positions 1450–1592 (RLGPLLTTVI…LLSQQIAISV (143 aa)) constitute a GAF domain. In terms of domain architecture, Histidine kinase spans 1760–1986 (NMSHELRTPF…TFWFHVQLRN (227 aa)). Histidine 1763 bears the Phosphohistidine; by autocatalysis mark. The Response regulatory domain maps to 2180–2303 (YALIAEDNLI…QLVNAVREFV (124 aa)). Position 2232 is a 4-aspartylphosphate (aspartate 2232).

Its subcellular location is the cytoplasm. The enzyme catalyses ATP + protein L-histidine = ADP + protein N-phospho-L-histidine.. Its function is as follows. Involved in the control of the SAPK-dependent transcriptional response to peroxide stress. Regulates sty1 activity. This Schizosaccharomyces pombe (strain 972 / ATCC 24843) (Fission yeast) protein is Peroxide stress-activated histidine kinase mak2 (mak2).